The following is a 394-amino-acid chain: MAKAKFERNKPHVNVGTIGHVDHGKTTLTAAISHVLAKTYGGEAKDFSQIDNAPEERERGITINTSHIEYDTPTRHYAHVDCPGHADYVKNMITGAAQMDGAILVVASTDGPMPQTREHILLSRQVGVPFIIVFMNKCDMVDDAELLELVEMEVRELLSEYDFPGDDLPVIQGSALKALEGEPEWEAKIIELAAALDSYIPEPERDIDKPFLMPIEDVFSISGRGTVVTGRVERGIVRVGDEVEIVGIRTTTKTTCTGVEMFRKLLDEGRAGENCGILLRGTKRDDVERGQVLSKPGSINPHTTFESEVYVLSKEEGGRHTPFFKGYRPQFYFRTTDVTGTIELPEGVEMVMPGDNIKMVVTLICPIAMDEGLRFAIREGGRTVGAGVVAKIIA.

Residues 10 to 204 enclose the tr-type G domain; the sequence is KPHVNVGTIG…ALDSYIPEPE (195 aa). The G1 stretch occupies residues 19–26; it reads GHVDHGKT. 19 to 26 contributes to the GTP binding site; that stretch reads GHVDHGKT. T26 provides a ligand contact to Mg(2+). The G2 stretch occupies residues 60 to 64; sequence GITIN. The G3 stretch occupies residues 81 to 84; that stretch reads DCPG. Residues 81–85 and 136–139 each bind GTP; these read DCPGH and NKCD. Residues 136 to 139 are G4; the sequence is NKCD. The G5 stretch occupies residues 174–176; sequence SAL.

This sequence belongs to the TRAFAC class translation factor GTPase superfamily. Classic translation factor GTPase family. EF-Tu/EF-1A subfamily. As to quaternary structure, monomer.

The protein resides in the cytoplasm. It catalyses the reaction GTP + H2O = GDP + phosphate + H(+). Its function is as follows. GTP hydrolase that promotes the GTP-dependent binding of aminoacyl-tRNA to the A-site of ribosomes during protein biosynthesis. This chain is Elongation factor Tu 2, found in Shewanella sp. (strain MR-4).